Reading from the N-terminus, the 133-residue chain is Small ribosomal subunit protein uS9 (133 aa).

A disordered region spans residues 111–133; it reads PRRSESKKFGGPGARARKQKSYR.

Belongs to the universal ribosomal protein uS9 family.

This is Small ribosomal subunit protein uS9 from Methanosphaera stadtmanae (strain ATCC 43021 / DSM 3091 / JCM 11832 / MCB-3).